Here is a 297-residue protein sequence, read N- to C-terminus: uncharacterized protein (297 aa).

This is an uncharacterized protein from Bacillus subtilis (strain 168).